The following is a 273-amino-acid chain: Zinc finger protein 80 (273 aa).

2 C2H2-type zinc fingers span residues 49–71 and 77–99; these read YKCK…QQIH and YECQ…MRIH. A C2H2-type 3; atypical zinc finger spans residues 105-127; it reads CKCVECGKVFNRRSHLLCYRQIH. 4 C2H2-type zinc fingers span residues 133–155, 161–183, 189–211, and 217–239; these read YECS…RVTH, FGCK…MKIH, CKCS…SMTH, and YECK…TRSH.

It belongs to the krueppel C2H2-type zinc-finger protein family.

The protein resides in the nucleus. May be involved in transcriptional regulation. In Homo sapiens (Human), this protein is Zinc finger protein 80 (ZNF80).